The chain runs to 284 residues: Dihydropteroate synthase (284 aa).

Positions 6–265 constitute a Pterin-binding domain; sequence VQVIGVLNVT…DVRASVDALK (260 aa). Asparagine 13 contributes to the Mg(2+) binding site. (7,8-dihydropterin-6-yl)methyl diphosphate contacts are provided by residues threonine 53, aspartate 86, asparagine 105, aspartate 177, lysine 213, and 253–255; that span reads RVH.

Belongs to the DHPS family. As to quaternary structure, homodimer. Mg(2+) is required as a cofactor.

The catalysed reaction is (7,8-dihydropterin-6-yl)methyl diphosphate + 4-aminobenzoate = 7,8-dihydropteroate + diphosphate. It functions in the pathway cofactor biosynthesis; tetrahydrofolate biosynthesis; 7,8-dihydrofolate from 2-amino-4-hydroxy-6-hydroxymethyl-7,8-dihydropteridine diphosphate and 4-aminobenzoate: step 1/2. With respect to regulation, is potently inhibited by the sulfone dapsone and the two sulfonamides sulfamethoxazole and sulfamethoxypyridazine, with Kis in the range of 12 to 32 nM. To a lesser extent, is also inhibited by p-aminosalicylate (PAS). Functionally, catalyzes the condensation of para-aminobenzoate (pABA) with 6-hydroxymethyl-7,8-dihydropterin diphosphate (DHPt-PP) to form 7,8-dihydropteroate, the immediate precursor of folate derivatives. This Mycobacterium leprae (strain TN) protein is Dihydropteroate synthase (folP1).